Here is a 621-residue protein sequence, read N- to C-terminus: Exonuclease 3'-5' domain-containing protein 2 (621 aa).

Residues M1–Q4 lie on the Mitochondrial intermembrane side of the membrane. A helical transmembrane segment spans residues N5 to W25. Residues K26–S621 lie on the Cytoplasmic side of the membrane. A disordered region spans residues S34–S68. Positions T36–V47 are enriched in polar residues. D108, E110, and D246 together coordinate a divalent metal cation. One can recognise a 3'-5' exonuclease domain in the interval I155 to A247. The tract at residues R299–L343 is disordered.

The protein belongs to the EXD2 family. In terms of assembly, homodimer. Interacts with RBBP8, MRE11 and BRCA1. The cofactor is Mg(2+). Mn(2+) serves as cofactor.

The protein localises to the mitochondrion outer membrane. Its subcellular location is the mitochondrion matrix. The protein resides in the nucleus. It localises to the chromosome. It catalyses the reaction Exonucleolytic cleavage in the 3'- to 5'-direction to yield nucleoside 5'-phosphates.. Its function is as follows. Exonuclease that has both 3'-5' exoribonuclease and exodeoxyribonuclease activities, depending on the divalent metal cation used as cofactor. In presence of Mg(2+), only shows 3'-5' exoribonuclease activity, while it shows both exoribonuclease and exodeoxyribonuclease activities in presence of Mn(2+). Acts as an exoribonuclease in mitochondrion, possibly by regulating ATP production and mitochondrial translation. Also involved in the response to DNA damage. Acts as 3'-5' exodeoxyribonuclease for double-strand breaks resection and efficient homologous recombination. Plays a key role in controlling the initial steps of chromosomal break repair, it is recruited to chromatin in a damage-dependent manner and functionally interacts with the MRN complex to accelerate resection through its 3'-5' exonuclease activity, which efficiently processes double-stranded DNA substrates containing nicks. Also involved in response to replicative stress: recruited to stalled forks and is required to stabilize and restart stalled replication forks by restraining excessive fork regression, thereby suppressing their degradation. The chain is Exonuclease 3'-5' domain-containing protein 2 from Homo sapiens (Human).